The following is a 40-amino-acid chain: Photosystem II reaction center protein J (40 aa).

Residues isoleucine 8–phenylalanine 28 form a helical membrane-spanning segment.

Belongs to the PsbJ family. As to quaternary structure, PSII is composed of 1 copy each of membrane proteins PsbA, PsbB, PsbC, PsbD, PsbE, PsbF, PsbH, PsbI, PsbJ, PsbK, PsbL, PsbM, PsbT, PsbX, PsbY, PsbZ, Psb30/Ycf12, at least 3 peripheral proteins of the oxygen-evolving complex and a large number of cofactors. It forms dimeric complexes.

The protein localises to the plastid. It localises to the chloroplast thylakoid membrane. One of the components of the core complex of photosystem II (PSII). PSII is a light-driven water:plastoquinone oxidoreductase that uses light energy to abstract electrons from H(2)O, generating O(2) and a proton gradient subsequently used for ATP formation. It consists of a core antenna complex that captures photons, and an electron transfer chain that converts photonic excitation into a charge separation. The sequence is that of Photosystem II reaction center protein J from Zea mays (Maize).